Here is a 296-residue protein sequence, read N- to C-terminus: 4-diphosphocytidyl-2-C-methyl-D-erythritol kinase (296 aa).

Lys-11 is an active-site residue. 96 to 106 (PVSSGLAGGSA) serves as a coordination point for ATP. Residue Asp-136 is part of the active site.

The protein belongs to the GHMP kinase family. IspE subfamily.

The enzyme catalyses 4-CDP-2-C-methyl-D-erythritol + ATP = 4-CDP-2-C-methyl-D-erythritol 2-phosphate + ADP + H(+). Its pathway is isoprenoid biosynthesis; isopentenyl diphosphate biosynthesis via DXP pathway; isopentenyl diphosphate from 1-deoxy-D-xylulose 5-phosphate: step 3/6. Its function is as follows. Catalyzes the phosphorylation of the position 2 hydroxy group of 4-diphosphocytidyl-2C-methyl-D-erythritol. The protein is 4-diphosphocytidyl-2-C-methyl-D-erythritol kinase of Anaplasma phagocytophilum (strain HZ).